A 383-amino-acid chain; its full sequence is Succinyl-diaminopimelate desuccinylase (383 aa).

H73 provides a ligand contact to Zn(2+). D75 is a catalytic residue. Position 107 (D107) interacts with Zn(2+). E141 (proton acceptor) is an active-site residue. Zn(2+) contacts are provided by E142, E170, and H356.

Belongs to the peptidase M20A family. DapE subfamily. In terms of assembly, homodimer. Requires Zn(2+) as cofactor. Co(2+) serves as cofactor.

It catalyses the reaction N-succinyl-(2S,6S)-2,6-diaminopimelate + H2O = (2S,6S)-2,6-diaminopimelate + succinate. It functions in the pathway amino-acid biosynthesis; L-lysine biosynthesis via DAP pathway; LL-2,6-diaminopimelate from (S)-tetrahydrodipicolinate (succinylase route): step 3/3. Functionally, catalyzes the hydrolysis of N-succinyl-L,L-diaminopimelic acid (SDAP), forming succinate and LL-2,6-diaminopimelate (DAP), an intermediate involved in the bacterial biosynthesis of lysine and meso-diaminopimelic acid, an essential component of bacterial cell walls. This Pseudomonas fluorescens (strain ATCC BAA-477 / NRRL B-23932 / Pf-5) protein is Succinyl-diaminopimelate desuccinylase.